The primary structure comprises 462 residues: C4-dicarboxylate transport transcriptional regulatory protein DctD (462 aa).

Residues 12 to 126 (QVLLIDDDPH…ALLDSVRRAL (115 aa)) enclose the Response regulatory domain. Aspartate 61 is subject to 4-aspartylphosphate. The Sigma-54 factor interaction domain occupies 152-381 (LIGRSAGMQR…LQNAAERFAL (230 aa)). ATP is bound by residues 180–187 (GETGAGKE) and 243–252 (ANGGTLFLDE).

Post-translationally, phosphorylated by DctB.

Its function is as follows. Member of the two-component regulatory system DctB/DctD, which regulates C4-dicarboxylate transport via regulation of expression of the dctPQM operon and dctA. In Pseudomonas aeruginosa (strain ATCC 15692 / DSM 22644 / CIP 104116 / JCM 14847 / LMG 12228 / 1C / PRS 101 / PAO1), this protein is C4-dicarboxylate transport transcriptional regulatory protein DctD.